Reading from the N-terminus, the 481-residue chain is Ribulose bisphosphate carboxylase large chain (481 aa).

A propeptide spanning residues 1 to 2 (MS) is cleaved from the precursor. Pro-3 carries the post-translational modification N-acetylproline. An N6,N6,N6-trimethyllysine modification is found at Lys-14. The substrate site is built by Asn-123 and Thr-173. Lys-175 serves as the catalytic Proton acceptor. Lys-177 lines the substrate pocket. Positions 201, 203, and 204 each coordinate Mg(2+). At Lys-201 the chain carries N6-carboxylysine. The active-site Proton acceptor is His-294. Substrate contacts are provided by Arg-295, His-327, and Ser-379.

The protein belongs to the RuBisCO large chain family. Type I subfamily. In terms of assembly, heterohexadecamer of 8 large chains and 8 small chains; disulfide-linked. The disulfide link is formed within the large subunit homodimers. Mg(2+) serves as cofactor. In terms of processing, the disulfide bond which can form in the large chain dimeric partners within the hexadecamer appears to be associated with oxidative stress and protein turnover.

It is found in the plastid. The enzyme catalyses 2 (2R)-3-phosphoglycerate + 2 H(+) = D-ribulose 1,5-bisphosphate + CO2 + H2O. It carries out the reaction D-ribulose 1,5-bisphosphate + O2 = 2-phosphoglycolate + (2R)-3-phosphoglycerate + 2 H(+). RuBisCO catalyzes two reactions: the carboxylation of D-ribulose 1,5-bisphosphate, the primary event in carbon dioxide fixation, as well as the oxidative fragmentation of the pentose substrate in the photorespiration process. Both reactions occur simultaneously and in competition at the same active site. The polypeptide is Ribulose bisphosphate carboxylase large chain (Cuscuta gronovii (Common dodder)).